The primary structure comprises 546 residues: Chaperonin GroEL (546 aa).

Residues 30 to 33 (TLGP), 87 to 91 (DGTTT), G414, 477 to 479 (NAL), and D493 contribute to the ATP site.

The protein belongs to the chaperonin (HSP60) family. As to quaternary structure, forms a cylinder of 14 subunits composed of two heptameric rings stacked back-to-back. Interacts with the co-chaperonin GroES.

Its subcellular location is the cytoplasm. The enzyme catalyses ATP + H2O + a folded polypeptide = ADP + phosphate + an unfolded polypeptide.. Together with its co-chaperonin GroES, plays an essential role in assisting protein folding. The GroEL-GroES system forms a nano-cage that allows encapsulation of the non-native substrate proteins and provides a physical environment optimized to promote and accelerate protein folding. This Syntrophomonas wolfei subsp. wolfei (strain DSM 2245B / Goettingen) protein is Chaperonin GroEL.